The sequence spans 634 residues: Putative ABC transporter ATP-binding protein MG015 homolog (634 aa).

The next 6 helical transmembrane spans lie at 54-74 (VLYVMVCAIFGILTGVTNSIL), 111-131 (LTIVCVTVVVAYILIFSFNVA), 189-209 (VGGQTIQSLFILMTTATILFV), 213-233 (VIALISLTVLIALIALSFLFL), 296-316 (VFIYSWFGFISNITYLASISI), and 325-345 (IPSFGVSAINYSFMLSYIAAL). The ABC transmembrane type-1 domain maps to 54 to 364 (VLYVMVCAIF…IFSLWNLIQL (311 aa)). The region spanning 397–631 (IRFEKVVFGY…NGFYARLKRS (235 aa)) is the ABC transporter domain. 430–437 (GPTGAGKS) provides a ligand contact to ATP.

The protein belongs to the ABC transporter superfamily.

It localises to the cell membrane. The polypeptide is Putative ABC transporter ATP-binding protein MG015 homolog (Mycoplasma pneumoniae (strain ATCC 29342 / M129 / Subtype 1) (Mycoplasmoides pneumoniae)).